Consider the following 38-residue polypeptide: Cytochrome b6-f complex subunit 5 (38 aa).

The chain crosses the membrane as a helical span at residues 5–25; the sequence is LLSGIVLGSIPITLAGSFVTA.

This sequence belongs to the PetG family. In terms of assembly, the 4 large subunits of the cytochrome b6-f complex are cytochrome b6, subunit IV (17 kDa polypeptide, PetD), cytochrome f and the Rieske protein, while the 4 small subunits are PetG, PetL, PetM and PetN. The complex functions as a dimer.

Its subcellular location is the plastid. The protein resides in the chloroplast thylakoid membrane. Component of the cytochrome b6-f complex, which mediates electron transfer between photosystem II (PSII) and photosystem I (PSI), cyclic electron flow around PSI, and state transitions. PetG is required for either the stability or assembly of the cytochrome b6-f complex. The sequence is that of Cytochrome b6-f complex subunit 5 from Huperzia lucidula (Shining clubmoss).